The chain runs to 88 residues: Small ribosomal subunit protein bS16 (88 aa).

Belongs to the bacterial ribosomal protein bS16 family.

This is Small ribosomal subunit protein bS16 from Symbiobacterium thermophilum (strain DSM 24528 / JCM 14929 / IAM 14863 / T).